Here is a 288-residue protein sequence, read N- to C-terminus: ATP synthase gamma chain (288 aa).

The protein belongs to the ATPase gamma chain family. As to quaternary structure, F-type ATPases have 2 components, CF(1) - the catalytic core - and CF(0) - the membrane proton channel. CF(1) has five subunits: alpha(3), beta(3), gamma(1), delta(1), epsilon(1). CF(0) has three main subunits: a, b and c.

Its subcellular location is the cell inner membrane. In terms of biological role, produces ATP from ADP in the presence of a proton gradient across the membrane. The gamma chain is believed to be important in regulating ATPase activity and the flow of protons through the CF(0) complex. This chain is ATP synthase gamma chain, found in Blochmanniella floridana.